Reading from the N-terminus, the 250-residue chain is DNA repair protein RecO (250 aa).

This sequence belongs to the RecO family.

Its function is as follows. Involved in DNA repair and RecF pathway recombination. In Lactobacillus helveticus (strain DPC 4571), this protein is DNA repair protein RecO.